Consider the following 78-residue polypeptide: Large ribosomal subunit protein bL28 (78 aa).

The protein belongs to the bacterial ribosomal protein bL28 family.

The sequence is that of Large ribosomal subunit protein bL28 from Klebsiella pneumoniae (strain 342).